We begin with the raw amino-acid sequence, 94 residues long: PqqA binding protein (94 aa).

This sequence belongs to the PqqD family. As to quaternary structure, monomer. Interacts with PqqE.

It functions in the pathway cofactor biosynthesis; pyrroloquinoline quinone biosynthesis. Its function is as follows. Functions as a PqqA binding protein and presents PqqA to PqqE, in the pyrroloquinoline quinone (PQQ) biosynthetic pathway. This chain is PqqA binding protein, found in Pseudomonas savastanoi pv. phaseolicola (strain 1448A / Race 6) (Pseudomonas syringae pv. phaseolicola (strain 1448A / Race 6)).